Reading from the N-terminus, the 490-residue chain is Ribulose bisphosphate carboxylase large chain (490 aa).

Substrate is bound by residues N127 and T177. Catalysis depends on K179, which acts as the Proton acceptor. K181 provides a ligand contact to substrate. Mg(2+)-binding residues include K205, D207, and E208. K205 is modified (N6-carboxylysine). Catalysis depends on H297, which acts as the Proton acceptor. Substrate contacts are provided by R298, H330, and S382.

Belongs to the RuBisCO large chain family. Type I subfamily. In terms of assembly, heterohexadecamer of 8 large chains and 8 small chains. It depends on Mg(2+) as a cofactor.

The protein resides in the plastid. It localises to the chloroplast. The enzyme catalyses 2 (2R)-3-phosphoglycerate + 2 H(+) = D-ribulose 1,5-bisphosphate + CO2 + H2O. It catalyses the reaction D-ribulose 1,5-bisphosphate + O2 = 2-phosphoglycolate + (2R)-3-phosphoglycerate + 2 H(+). Its function is as follows. RuBisCO catalyzes two reactions: the carboxylation of D-ribulose 1,5-bisphosphate, the primary event in carbon dioxide fixation, as well as the oxidative fragmentation of the pentose substrate in the photorespiration process. Both reactions occur simultaneously and in competition at the same active site. The chain is Ribulose bisphosphate carboxylase large chain from Thalassiosira pseudonana (Marine diatom).